The primary structure comprises 396 residues: Methionine import ATP-binding protein MetN 2 (396 aa).

The ABC transporter domain occupies 41-280 (VSFELVGKVF…PRHGATRALL (240 aa)). 77–84 (GRSGAGKS) serves as a coordination point for ATP.

This sequence belongs to the ABC transporter superfamily. Methionine importer (TC 3.A.1.24) family. In terms of assembly, the complex is composed of two ATP-binding proteins (MetN), two transmembrane proteins (MetI) and a solute-binding protein (MetQ).

It localises to the cell inner membrane. The enzyme catalyses L-methionine(out) + ATP + H2O = L-methionine(in) + ADP + phosphate + H(+). It carries out the reaction D-methionine(out) + ATP + H2O = D-methionine(in) + ADP + phosphate + H(+). Its function is as follows. Part of the ABC transporter complex MetNIQ involved in methionine import. Responsible for energy coupling to the transport system. This is Methionine import ATP-binding protein MetN 2 from Burkholderia mallei (strain ATCC 23344).